We begin with the raw amino-acid sequence, 241 residues long: Urease accessory protein UreF 1 (241 aa).

This sequence belongs to the UreF family. UreD, UreF and UreG form a complex that acts as a GTP-hydrolysis-dependent molecular chaperone, activating the urease apoprotein by helping to assemble the nickel containing metallocenter of UreC. The UreE protein probably delivers the nickel.

Its subcellular location is the cytoplasm. Its function is as follows. Required for maturation of urease via the functional incorporation of the urease nickel metallocenter. This is Urease accessory protein UreF 1 from Brucella melitensis biotype 1 (strain ATCC 23456 / CCUG 17765 / NCTC 10094 / 16M).